Here is a 341-residue protein sequence, read N- to C-terminus: MITVLRIGHRPFRDKRITTHVALVARAFGASSIYIDTRDDELENTVKKVVDNFGGSFEVKTGIEWKSFMKKFHGTKVNLTMYGEPIEKRIDEIKSGDDILVLVGAEKVPIDAYLIADYNISVTNQPHSEVAALAIFLDRYFDGKELEKSYEGKINVVPMNHGKLVKYIPDEDQCLMILKSENADDLIIRHVETVYKVAMRMADCIPCDRRLVAAGALLHDIGRTKTNNIDHAIAGAEILKKKNIDDRIVRIVERHTGAGITSEEAQKLGLPVKDYVPETIEEKIVAHADNLVSMDRIINLKQLMDKYENKNLHDAALRIKKLHEELSSICGRDLDDITKDL.

S-adenosyl-L-methionine contacts are provided by residues leucine 79 and 104 to 108 (GAEKV). The 108-residue stretch at 187–294 (IIRHVETVYK…VAHADNLVSM (108 aa)) folds into the HD domain.

It belongs to the aTrm56 family. Homodimer.

It is found in the cytoplasm. It carries out the reaction cytidine(56) in tRNA + S-adenosyl-L-methionine = 2'-O-methylcytidine(56) in tRNA + S-adenosyl-L-homocysteine + H(+). Its function is as follows. Specifically catalyzes the AdoMet-dependent 2'-O-ribose methylation of cytidine at position 56 in tRNAs. The chain is tRNA (cytidine(56)-2'-O)-methyltransferase from Picrophilus torridus (strain ATCC 700027 / DSM 9790 / JCM 10055 / NBRC 100828 / KAW 2/3).